A 183-amino-acid polypeptide reads, in one-letter code: Peptidyl-tRNA hydrolase (183 aa).

Y15 is a binding site for tRNA. H20 functions as the Proton acceptor in the catalytic mechanism. The tRNA site is built by Y67 and N69.

It belongs to the PTH family. Monomer.

It is found in the cytoplasm. It catalyses the reaction an N-acyl-L-alpha-aminoacyl-tRNA + H2O = an N-acyl-L-amino acid + a tRNA + H(+). In terms of biological role, hydrolyzes ribosome-free peptidyl-tRNAs (with 1 or more amino acids incorporated), which drop off the ribosome during protein synthesis, or as a result of ribosome stalling. Its function is as follows. Catalyzes the release of premature peptidyl moieties from peptidyl-tRNA molecules trapped in stalled 50S ribosomal subunits, and thus maintains levels of free tRNAs and 50S ribosomes. This is Peptidyl-tRNA hydrolase from Chlamydia abortus (strain DSM 27085 / S26/3) (Chlamydophila abortus).